The chain runs to 947 residues: Protein NLP8 (947 aa).

3 disordered regions span residues 114 to 135, 509 to 533, and 550 to 591; these read RSSA…ELSG, STKK…TTSS, and SMFS…EKNV. Positions 126 to 135 are enriched in basic and acidic residues; the sequence is RSSDSDELSG. Polar residues-rich tracts occupy residues 522–533 and 550–572; these read SDMSNFPQTTSS and SMFS…TLEQ. Positions 573-587 are enriched in basic and acidic residues; that stretch reads DVSKARTPEKKKSTT. The RWP-RK domain occupies 577 to 671; sequence ARTPEKKKST…LDSVQGVEGG (95 aa). The stretch at 646-666 forms a coiled coil; the sequence is RKINKVNRSLRKIQTVLDSVQ. Over residues 805-815 the composition is skewed to low complexity; the sequence is SCSISDSSNGS. Positions 805-828 are disordered; sequence SCSISDSSNGSGAVLRGSSSTSME. Residues 847–929 enclose the PB1 domain; the sequence is TLIVKASYRE…HSVKFLVRDL (83 aa).

It localises to the nucleus. Its function is as follows. Probable transcription factor. In Arabidopsis thaliana (Mouse-ear cress), this protein is Protein NLP8 (NLP8).